A 309-amino-acid chain; its full sequence is Probable manganese-dependent inorganic pyrophosphatase (309 aa).

Residues H9, D13, D15, D75, H97, and D149 each coordinate Mn(2+).

Belongs to the PPase class C family. Mn(2+) is required as a cofactor.

It localises to the cytoplasm. It carries out the reaction diphosphate + H2O = 2 phosphate + H(+). The protein is Probable manganese-dependent inorganic pyrophosphatase of Staphylococcus haemolyticus (strain JCSC1435).